We begin with the raw amino-acid sequence, 465 residues long: Argininosuccinate lyase (465 aa).

This sequence belongs to the lyase 1 family. Argininosuccinate lyase subfamily.

It is found in the cytoplasm. The catalysed reaction is 2-(N(omega)-L-arginino)succinate = fumarate + L-arginine. Its pathway is amino-acid biosynthesis; L-arginine biosynthesis; L-arginine from L-ornithine and carbamoyl phosphate: step 3/3. The protein is Argininosuccinate lyase of Rhodopseudomonas palustris (strain HaA2).